The chain runs to 191 residues: Glutathione-dependent formaldehyde-activating enzyme (191 aa).

Residues 22–169 (FAGGTLQCLC…LTELGLTPYD (148 aa)) form the CENP-V/GFA domain. Residues Cys-29, Cys-31, Cys-50, Cys-52, Cys-55, Cys-97, and Cys-100 each coordinate Zn(2+).

This sequence belongs to the Gfa family. It depends on Zn(2+) as a cofactor.

It carries out the reaction S-(hydroxymethyl)glutathione = glutathione + formaldehyde. Its pathway is one-carbon metabolism; formaldehyde degradation; formate from formaldehyde (glutathione route): step 1/3. Functionally, catalyzes the condensation of formaldehyde and glutathione to S-hydroxymethylglutathione. This is Glutathione-dependent formaldehyde-activating enzyme from Xanthomonas campestris pv. campestris (strain 8004).